The primary structure comprises 61 residues: Large ribosomal subunit protein uL30 (61 aa).

It belongs to the universal ribosomal protein uL30 family. Part of the 50S ribosomal subunit.

The polypeptide is Large ribosomal subunit protein uL30 (Teredinibacter turnerae (strain ATCC 39867 / T7901)).